The following is a 157-amino-acid chain: uncharacterized protein (157 aa).

The next 4 membrane-spanning stretches (helical) occupy residues 3–23 (IFSF…MFIS), 24–44 (AFLS…ALAV), 47–67 (LMLG…ATAG), and 105–125 (IALL…IAGW).

It to E.coli YqaA.

Its subcellular location is the cell membrane. This is an uncharacterized protein from Haemophilus influenzae (strain ATCC 51907 / DSM 11121 / KW20 / Rd).